Here is a 180-residue protein sequence, read N- to C-terminus: MSRIGKKIVLLPTNISTQFDGQTITVNGPKGTLLRTLPEGITLEINDGTILVQTSGNSKRANQLHGLSRTLISNMIEGVSTGFSKKLQIQGVGYRSQIDNNNLILSVGYSHVVTIQPPQNIEIKVENNTSITVLGIDKEVVGQVASSIRSIRPPEPYKGKGIRYQGEVVRTKAGKAGKGK.

It belongs to the universal ribosomal protein uL6 family. Part of the 50S ribosomal subunit.

Its subcellular location is the plastid. It localises to the chloroplast. Binds 23S rRNA. The chain is Large ribosomal subunit protein uL6c (rpl6) from Porphyra purpurea (Red seaweed).